Here is a 346-residue protein sequence, read N- to C-terminus: Flap endonuclease 1 (346 aa).

The N-domain stretch occupies residues 1 to 100 (MGVDIKELVE…KELERRYQIK (100 aa)). 7 residues coordinate Mg(2+): D29, D82, E154, E156, D175, D177, and D238. The segment at 118–260 (EARIYAQQTS…KALKLVKELK (143 aa)) is I-domain. Residues 336–344 (KQQSLESWF) are interaction with PCNA.

Belongs to the XPG/RAD2 endonuclease family. FEN1 subfamily. As to quaternary structure, interacts with PCNA. PCNA stimulates the nuclease activity without altering cleavage specificity. Mg(2+) is required as a cofactor.

Structure-specific nuclease with 5'-flap endonuclease and 5'-3' exonuclease activities involved in DNA replication and repair. During DNA replication, cleaves the 5'-overhanging flap structure that is generated by displacement synthesis when DNA polymerase encounters the 5'-end of a downstream Okazaki fragment. Binds the unpaired 3'-DNA end and kinks the DNA to facilitate 5' cleavage specificity. Cleaves one nucleotide into the double-stranded DNA from the junction in flap DNA, leaving a nick for ligation. Also involved in the base excision repair (BER) pathway. Acts as a genome stabilization factor that prevents flaps from equilibrating into structures that lead to duplications and deletions. Also possesses 5'-3' exonuclease activity on nicked or gapped double-stranded DNA. This is Flap endonuclease 1 from Thermofilum pendens (strain DSM 2475 / Hrk 5).